A 385-amino-acid chain; its full sequence is Trans-enoyl reductase poxH (385 aa).

64–67 (QPYS) provides a ligand contact to NADP(+). A substrate-binding site is contributed by 156 to 163 (PDPAAPPI). NADP(+)-binding positions include 199–202 (STSV), 223–226 (SGTD), Tyr-241, and 289–290 (LG). Position 309–313 (309–313 (HMAPL)) interacts with substrate. 372–373 (KR) contacts NADP(+).

It belongs to the zinc-containing alcohol dehydrogenase family. As to quaternary structure, monomer.

It functions in the pathway secondary metabolite biosynthesis. Trans-enoyl reductase; part of the gene cluster that mediates the biosynthesis of oxaleimides, cytotoxic compounds containing an unusual disubstituted succinimide moiety. The first step of the pathway is provided by the HR-PKS poxF that serves in a new mode of collaborative biosynthesis with the PKS-NRPS poxE, by providing the olefin containing amino acid substrate via the synthesis of an ACP-bound dec-4-enoate. The cytochrome P450 monooxygenase poxM-catalyzed oxidation at the alpha-position creates the enzyme-bound 2-hydroxydec-4-enoyl-ACP thioester, which may be prone to spontaneous hydrolysis to yield 2-hydroxydec-4-enoic acid due to increased electrophilicity of the carbonyl. 2-hydroxydec-4-enoic acid can then be further oxidized by poxM to yield the alpha-ketoacid 2-oxodec-4-enoicacid, which is reductively aminated by the aminotransferase poxL to yield (S,E)-2-aminodec-4-enoic acid. The Hybrid PKS-NRPS synthetase poxE then performs condensation between the octaketide product of its PKS modules and the amino group of (S,E)-2-aminodec-4-enoic acid which is activated and incorporated by the adenylation domain. The resulting aminoacyl product can be cyclized by the Diels-Alderase PoxQ and reductively released by the reductive (R) domain of poxE to yield an aldehyde intermediate. The released aldehyde is then substrate for a Knoevenagel condensation by the hydrolyase poxO followed by an oxidation at the 5-position of the pyrrolidone ring. The presence of the olefin from the amino acid building block allows for migration of the substituted allyl group to occur. This allylic transposition reaction takes place in a conjugate addition, semipinacol-like fashion to yield a succinimide intermediate. Iterative two-electron oxidations of the C7 methyl of the succinimide intermediate to the carboxylic acid can be catalyzed by one of two remaining cytochrome P450 monooxygenasess poxC or poxD to yield oxaleimide A. Subsequent oxidation yields the maleimide scaffold oxaleimide I. Both oxaleimide A and oxaleimide I can undergo oxidative modifications in the decalin ring to yield the series of products oxaleimides B to H. The protein is Trans-enoyl reductase poxH of Penicillium oxalicum (strain 114-2 / CGMCC 5302) (Penicillium decumbens).